Here is a 367-residue protein sequence, read N- to C-terminus: Farnesyl pyrophosphate synthase (367 aa).

3 residues coordinate isopentenyl diphosphate: K71, R74, and Q110. Mg(2+)-binding residues include D117 and D121. R126 lines the dimethylallyl diphosphate pocket. Residue R127 coordinates isopentenyl diphosphate. Dimethylallyl diphosphate-binding residues include K214, T215, Q254, K271, and K280.

This sequence belongs to the FPP/GGPP synthase family. In terms of assembly, homodimer. Mg(2+) serves as cofactor.

It localises to the cytoplasm. The catalysed reaction is isopentenyl diphosphate + dimethylallyl diphosphate = (2E)-geranyl diphosphate + diphosphate. It catalyses the reaction isopentenyl diphosphate + (2E)-geranyl diphosphate = (2E,6E)-farnesyl diphosphate + diphosphate. It functions in the pathway isoprenoid biosynthesis; farnesyl diphosphate biosynthesis; farnesyl diphosphate from geranyl diphosphate and isopentenyl diphosphate: step 1/1. Its pathway is isoprenoid biosynthesis; geranyl diphosphate biosynthesis; geranyl diphosphate from dimethylallyl diphosphate and isopentenyl diphosphate: step 1/1. In terms of biological role, catalyzes the sequential condensation of isopentenyl pyrophosphate with the allylic pyrophosphates, dimethylallyl pyrophosphate, and then with the resultant geranylpyrophosphate to the ultimate product farnesyl pyrophosphate. This chain is Farnesyl pyrophosphate synthase (FDPS), found in Gallus gallus (Chicken).